The sequence spans 422 residues: tRNA(Met) cytidine acetate ligase (422 aa).

ATP is bound by residues 7–20, G102, N172, and R197; that span reads ITEY…HLYH.

This sequence belongs to the TmcAL family.

It localises to the cytoplasm. The enzyme catalyses cytidine(34) in elongator tRNA(Met) + acetate + ATP = N(4)-acetylcytidine(34) in elongator tRNA(Met) + AMP + diphosphate. Its function is as follows. Catalyzes the formation of N(4)-acetylcytidine (ac(4)C) at the wobble position of elongator tRNA(Met), using acetate and ATP as substrates. First activates an acetate ion to form acetyladenylate (Ac-AMP) and then transfers the acetyl group to tRNA to form ac(4)C34. This is tRNA(Met) cytidine acetate ligase from Halothermothrix orenii (strain H 168 / OCM 544 / DSM 9562).